A 575-amino-acid polypeptide reads, in one-letter code: Guanine nucleotide-binding protein-like 3-like protein (575 aa).

The span at 1–30 (MMKLRHKNKKPGKGSKGCKKPAKQNGKKAA) shows a compositional bias: basic residues. Residues 1–75 (MMKLRHKNKK…AAREQERHRR (75 aa)) form a disordered region. The interval 9 to 28 (KKPGKGSKGCKKPAKQNGKK) is required for nucleolar localization. Basic and acidic residues predominate over residues 42 to 72 (SNDHASREAELKKKRVGEMREKQQAAREQER). The stretch at 51–79 (ELKKKRVGEMREKQQAAREQERHRRRTIE) forms a coiled coil. The 186-residue stretch at 118–303 (YKEFHKVVEY…LLDAPGIVPG (186 aa)) folds into the CP-type G domain. GTP-binding positions include 166-169 (NKID), 252-259 (GLPNVGKS), and 296-299 (DAPG). Residue lysine 470 forms a Glycyl lysine isopeptide (Lys-Gly) (interchain with G-Cter in SUMO1) linkage.

This sequence belongs to the TRAFAC class YlqF/YawG GTPase family. Interacts with MDM2; this interaction, which occurs in the nucleoplasm, stabilizes MDM2. Indirectly interacts with TP53, via MDM2-binding. Interacts with TERF1; this interaction probably occurs in the nucleoplasm and is increased during mitosis, when the nucleolus is disassembled. This binding may promote TERF1 homodimerization. Interacts with TERT.

The protein localises to the nucleus. Its subcellular location is the nucleolus. Its function is as follows. Stabilizes TERF1 telomeric association by preventing TERF1 recruitment by PML. Stabilizes TERF1 protein by preventing its ubiquitination and hence proteasomal degradation. Does so by interfering with TERF1-binding to FBXO4 E3 ubiquitin-protein ligase. Required for cell proliferation. By stabilizing TRF1 protein during mitosis, promotes metaphase-to-anaphase transition. Stabilizes MDM2 protein by preventing its ubiquitination, and hence proteasomal degradation. By acting on MDM2, may affect TP53 activity. Required for normal processing of ribosomal pre-rRNA. Binds GTP. The chain is Guanine nucleotide-binding protein-like 3-like protein (GNL3L) from Bos taurus (Bovine).